The sequence spans 416 residues: Transcription factor caaR (416 aa).

The segment at residues 13–44 is a DNA-binding region (zn(2)-C6 fungal-type); sequence CDRCYAQKLRCPRPSTNDDASCIRCLRQKVQC. 2 disordered regions span residues 68-90 and 130-150; these read ATAGAPPITTTTTTAAPSSSDTA and QPPPLDTTPPPRSLSASGLDN. Residues 130–141 are compositionally biased toward pro residues; it reads QPPPLDTTPPPR. Transmembrane regions (helical) follow at residues 249-269 and 302-322; these read VIYHFTIACYSLLLLIYATLL and SAPSLVELRLVLLFHMITYFL.

The protein localises to the membrane. Its subcellular location is the nucleus. Its function is as follows. Transcription factor that positively regulates the expression of the gene cluster that mediates the biosynthesis of the acyltetronic acid derivatives carlosic acid, agglomerin F and carlosic acid methyl ether. The polypeptide is Transcription factor caaR (Aspergillus niger (strain ATCC MYA-4892 / CBS 513.88 / FGSC A1513)).